The sequence spans 742 residues: MGETIADVYAESIDPEIYANNPAYSSLFTPYIHKQTIIADHVSVQCHIDLNGIDAVGSKFGNLNAHAGNFTSLCAPNCLPERLALVAYTVEYAFLHDDETDNAADQEALLLENKMLHQAINQSSMTSVSNRVSAKAQRKSEVQAKIAAEYLRLDPVFGEFFLKAWQTFTASVQDVRSLEFPSLDDYLEFRIVDAAADWTLYNFRWGSGITLTPEEEKIADPMSYVAYAELCLVNDLFSWDKEYDAHVKSNGEVPLVNAVHIVAVTQGLTHCAAKAVVQAEIRAHEERFCYLKEQYKATASPSDSILSWLKLLEHSMAGNWVWSLCVPRYFKVERNPYKDHLEKFGSEAVRVLTPEEHLRDSKQEINGTKEIELQEPKSNNTAESDVLAKYTSGYPTIDEPVLNPYTYINSLPSKNVRQTMIAALNSWYKVPVKSLLIIEGAVNFLHNSSLLLDDIQDGSVLRRGRPVAHQIFGVGQTINTATYLMNEALYLVQMLSPSAVLVYTDEMRNLQLGQGRDLHWSYHTHVPTPAQYISMVDGKTGGLFRLISRLMRSEATVNRDLDISQFATLLGRHFQIRDDYQNLQSDDYTKNKGFCDDLDEGKLSFPIILSMQSPGFSNTALSSVFKGSQKGETLSPEMKQYILEEITARGAFSQTKAVLRKLHIELLRLLMETEQKAGGIENWALRLLIMKLDLGDEKKKEAHKSDSAWKVNQRRAWKGSQKNGRPIDKACFLRAMEEASQK.

A terpene cyclase region spans residues 1–332 (MGETIADVYA…SLCVPRYFKV (332 aa)). Aspartate 97 lines the Mg(2+) pocket. Substrate-binding positions include aspartate 97, 190-193 (RIVD), asparagine 234, 238-242 (SWDKE), and 328-329 (RY). Residues 97–101 (DDETD) carry the DDXXD 1 motif. Residues 234-242 (NDLFSWDKE) carry the NSE/DTE motif. Residues 333 to 742 (ERNPYKDHLE…LRAMEEASQK (410 aa)) are prenyltransferase. Isopentenyl diphosphate-binding residues include lysine 414, arginine 417, and histidine 446. Aspartate 453 and aspartate 457 together coordinate Mg(2+). A DDXXD 2 motif is present at residues 453-457 (DDIQD). Position 462 (arginine 462) interacts with dimethylallyl diphosphate. Residue arginine 463 coordinates isopentenyl diphosphate. Lysine 539, threonine 540, glutamine 575, asparagine 582, lysine 592, and lysine 602 together coordinate dimethylallyl diphosphate. The segment at 701–724 (EAHKSDSAWKVNQRRAWKGSQKNG) is disordered.

The protein in the N-terminal section; belongs to the terpene synthase family. This sequence in the C-terminal section; belongs to the FPP/GGPP synthase family. In terms of assembly, hexamer. It depends on Mg(2+) as a cofactor.

The catalysed reaction is isopentenyl diphosphate + (2E,6E)-farnesyl diphosphate = (2E,6E,10E)-geranylgeranyl diphosphate + diphosphate. The protein operates within secondary metabolite biosynthesis; terpenoid biosynthesis. Functionally, bifunctional terpene synthase; part of the gene cluster that mediates the biosynthesis of conidiogenone, a diterpene known to induce the conidiation. The bifunctional terpene synthase PrDS converts isopentenyl diphosphate (IPP) and dimethylallyl diphosphate (DMAPP) into deoxyconidiogenol. The C-terminal prenyltransferase (PT) domain of PrDS catalyzes formation of GGPP, whereas the N-terminal terpene cyclase (TC) domain catalyzes the cyclization of GGPP into deoxyconidiogenol. The cytochrome P450 monooxygenase PrP450 then catalyzes two rounds of oxidation to furnish conidiogenone. The protein is Conidiogenone synthase of Penicillium roqueforti (strain FM164).